A 169-amino-acid chain; its full sequence is Large ribosomal subunit protein uL5 (169 aa).

Belongs to the universal ribosomal protein uL5 family. In terms of assembly, part of the 50S ribosomal subunit; contacts the 5S rRNA and probably tRNA. Forms a bridge to the 30S subunit in the 70S ribosome.

In terms of biological role, this is one of the proteins that bind and probably mediate the attachment of the 5S RNA into the large ribosomal subunit, where it forms part of the central protuberance. In the 70S ribosome it contacts protein S13 of the 30S subunit (bridge B1b), connecting the 2 subunits; this bridge is implicated in subunit movement. May contact the P site tRNA; the 5S rRNA and some of its associated proteins might help stabilize positioning of ribosome-bound tRNAs. This chain is Large ribosomal subunit protein uL5, found in Nanoarchaeum equitans (strain Kin4-M).